Consider the following 388-residue polypeptide: Succinate--CoA ligase [ADP-forming] subunit beta (388 aa).

The ATP-grasp domain occupies 9–244 (KQLFARYGLP…PSQEDSREAH (236 aa)). Residues Lys-46, 53-55 (GRG), Glu-99, Thr-102, and Glu-107 contribute to the ATP site. Asn-199 and Asp-213 together coordinate Mg(2+). Residues Asn-264 and 321 to 323 (GIV) contribute to the substrate site.

This sequence belongs to the succinate/malate CoA ligase beta subunit family. In terms of assembly, heterotetramer of two alpha and two beta subunits. Mg(2+) is required as a cofactor.

It catalyses the reaction succinate + ATP + CoA = succinyl-CoA + ADP + phosphate. It carries out the reaction GTP + succinate + CoA = succinyl-CoA + GDP + phosphate. It participates in carbohydrate metabolism; tricarboxylic acid cycle; succinate from succinyl-CoA (ligase route): step 1/1. Functionally, succinyl-CoA synthetase functions in the citric acid cycle (TCA), coupling the hydrolysis of succinyl-CoA to the synthesis of either ATP or GTP and thus represents the only step of substrate-level phosphorylation in the TCA. The beta subunit provides nucleotide specificity of the enzyme and binds the substrate succinate, while the binding sites for coenzyme A and phosphate are found in the alpha subunit. The polypeptide is Succinate--CoA ligase [ADP-forming] subunit beta (Pectobacterium atrosepticum (strain SCRI 1043 / ATCC BAA-672) (Erwinia carotovora subsp. atroseptica)).